An 85-amino-acid chain; its full sequence is Omega-conotoxin-like Am6.5 (85 aa).

The signal sequence occupies residues 1 to 19; the sequence is MCILIVAVLFLTAWTFVMA. A propeptide spanning residues 20 to 53 is cleaved from the precursor; that stretch reads DDPRDEPDTVVRGGKLFSRARDEMNPAASKLNER. Cystine bridges form between cysteine 55–cysteine 73, cysteine 62–cysteine 77, and cysteine 72–cysteine 81. Glutamine amide is present on glutamine 84.

The protein belongs to the conotoxin O1 family. In terms of processing, is not hydroxylated. As to expression, expressed by the venom duct.

The protein resides in the secreted. Omega-conotoxins act at presynaptic membranes, they bind and block voltage-gated calcium channels (Cav). The chain is Omega-conotoxin-like Am6.5 from Conus amadis (Amadis cone).